A 188-amino-acid chain; its full sequence is Photosystem I assembly protein Ycf4 (188 aa).

2 helical membrane-spanning segments follow: residues 26–48 (MLWASVSAIGGIGFLLAGLSSYF) and 68–90 (AALTFYGVAGTLLSAYLWFVFFL).

It belongs to the Ycf4 family.

It is found in the cellular thylakoid membrane. Its function is as follows. Seems to be required for the assembly of the photosystem I complex. The chain is Photosystem I assembly protein Ycf4 from Picosynechococcus sp. (strain ATCC 27264 / PCC 7002 / PR-6) (Agmenellum quadruplicatum).